The chain runs to 178 residues: Translation initiation factor IF-3 (178 aa).

This sequence belongs to the IF-3 family. Monomer.

Its subcellular location is the cytoplasm. Functionally, IF-3 binds to the 30S ribosomal subunit and shifts the equilibrium between 70S ribosomes and their 50S and 30S subunits in favor of the free subunits, thus enhancing the availability of 30S subunits on which protein synthesis initiation begins. The sequence is that of Translation initiation factor IF-3 from Legionella pneumophila (strain Paris).